A 665-amino-acid chain; its full sequence is Coiled-coil domain-containing protein 138 (665 aa).

T48 carries the phosphothreonine modification. S49 is modified (phosphoserine). Residues 198 to 323 (QQKFAEELQK…YEFMTIQRLK (126 aa)) adopt a coiled-coil conformation. At S469 the chain carries Phosphoserine.

The protein is Coiled-coil domain-containing protein 138 (CCDC138) of Homo sapiens (Human).